We begin with the raw amino-acid sequence, 217 residues long: UPF0502 protein swp_3027 (217 aa).

The protein belongs to the UPF0502 family.

The chain is UPF0502 protein swp_3027 from Shewanella piezotolerans (strain WP3 / JCM 13877).